The chain runs to 514 residues: Alpha-1,3/1,6-mannosyltransferase ALG2 (514 aa).

N-linked (GlcNAc...) asparagine glycosylation is present at Asn-94. Transmembrane regions (helical) follow at residues 443–463 and 468–490; these read WAVMVILAASYILWRSSHVFG and YIYLLTGGILVLRSRYLLAIFWV.

It belongs to the glycosyltransferase group 1 family.

The protein resides in the endoplasmic reticulum membrane. The catalysed reaction is a beta-D-Man-(1-&gt;4)-beta-D-GlcNAc-(1-&gt;4)-alpha-D-GlcNAc-diphospho-di-trans,poly-cis-dolichol + GDP-alpha-D-mannose = an alpha-D-Man-(1-&gt;3)-beta-D-Man-(1-&gt;4)-beta-D-GlcNAc-(1-&gt;4)-alpha-D-GlcNAc-diphospho-di-trans,poly-cis-dolichol + GDP + H(+). It carries out the reaction an alpha-D-Man-(1-&gt;3)-beta-D-Man-(1-&gt;4)-beta-D-GlcNAc-(1-&gt;4)-alpha-D-GlcNAc-diphospho-di-trans,poly-cis-dolichol + GDP-alpha-D-mannose = an alpha-D-Man-(1-&gt;3)-[alpha-D-Man-(1-&gt;6)]-beta-D-Man-(1-&gt;4)-beta-D-GlcNAc-(1-&gt;4)-alpha-D-GlcNAc-diphospho-di-trans,poly-cis-dolichol + GDP + H(+). Its pathway is protein modification; protein glycosylation. Mannosylates Man(2)GlcNAc(2)-dolichol diphosphate and Man(1)GlcNAc(2)-dolichol diphosphate to form Man(3)GlcNAc(2)-dolichol diphosphate. The sequence is that of Alpha-1,3/1,6-mannosyltransferase ALG2 (ALG2) from Eremothecium gossypii (strain ATCC 10895 / CBS 109.51 / FGSC 9923 / NRRL Y-1056) (Yeast).